A 118-amino-acid polypeptide reads, in one-letter code: uncharacterized protein (118 aa).

The next 3 helical transmembrane spans lie at 6–26 (ILILLVIIITTYFTRIWPFMV), 43–63 (ALSCSVIGMLVVYCFKDIHVL), and 84–104 (IFKVFVLSITLPTILYMVLVQ).

Belongs to the AzlD/HI_1737/HP1330 family.

The protein localises to the cell membrane. This is an uncharacterized protein from Helicobacter pylori (strain J99 / ATCC 700824) (Campylobacter pylori J99).